Reading from the N-terminus, the 761-residue chain is Translation initiation factor IF-2 (761 aa).

The interval 39-179 (DEETLNKAKQ…KVNHQQMPLP (141 aa)) is disordered. Positions 45 to 105 (KAKQAGKPAA…NNQQSQSQGQ (61 aa)) are enriched in low complexity. Positions 106 to 120 (TKRPSQASNNQSGAA) are enriched in polar residues. The span at 142-154 (PGSNNRRPGNNQN) shows a compositional bias: low complexity. Positions 155 to 168 (RRNHGNRGGKRRPQ) are enriched in basic residues. The tr-type G domain maps to 262–435 (ERPPVVTIMG…EVEEFKANPD (174 aa)). Residues 271–278 (GHVDHGKT) are G1. 271 to 278 (GHVDHGKT) serves as a coordination point for GTP. The G2 stretch occupies residues 296–300 (GITQH). Residues 317 to 320 (DTPG) form a G3 region. Residues 317 to 321 (DTPGH) and 371 to 374 (NKID) contribute to the GTP site. Residues 371-374 (NKID) form a G4 region. The interval 407–409 (SAL) is G5.

The protein belongs to the TRAFAC class translation factor GTPase superfamily. Classic translation factor GTPase family. IF-2 subfamily.

It is found in the cytoplasm. Functionally, one of the essential components for the initiation of protein synthesis. Protects formylmethionyl-tRNA from spontaneous hydrolysis and promotes its binding to the 30S ribosomal subunits. Also involved in the hydrolysis of GTP during the formation of the 70S ribosomal complex. The sequence is that of Translation initiation factor IF-2 from Shouchella clausii (strain KSM-K16) (Alkalihalobacillus clausii).